The primary structure comprises 65 residues: Ferredoxin-like protein in vnf region (65 aa).

4Fe-4S ferredoxin-type domains follow at residues 2–30 (AMAIDGYECTVCGDCEPVCPTGSIVFRDD) and 32–65 (YAIEADSCNECTDVGEPRCLGVCPVDLCIQPLDD). Residues Cys10, Cys13, Cys16, Cys20, Cys39, Cys42, Cys50, and Cys54 each coordinate [4Fe-4S] cluster.

The cofactor is [4Fe-4S] cluster.

This chain is Ferredoxin-like protein in vnf region, found in Azotobacter vinelandii.